A 258-amino-acid polypeptide reads, in one-letter code: Thiamine thiazole synthase (258 aa).

NAD(+) is bound by residues Ser-36, 55–56 (ER), Gly-63, Ile-127, and 153–155 (HVD). Residues Asp-155 and His-170 each contribute to the Fe cation site. Met-224 lines the NAD(+) pocket. Residue Arg-234 coordinates glycine.

The protein belongs to the THI4 family. As to quaternary structure, homooctamer; tetramer of dimers. Fe(2+) serves as cofactor.

It carries out the reaction hydrogen sulfide + glycine + NAD(+) = ADP-5-ethyl-4-methylthiazole-2-carboxylate + nicotinamide + 3 H2O + H(+). It functions in the pathway cofactor biosynthesis; thiamine diphosphate biosynthesis. Functionally, involved in the biosynthesis of the thiazole moiety of thiamine. Catalyzes the conversion of NAD and glycine to adenosine diphosphate 5-(2-hydroxyethyl)-4-methylthiazole-2-carboxylate (ADT), an adenylated thiazole intermediate, using free sulfide as a source of sulfur. This is Thiamine thiazole synthase from Methanothermobacter thermautotrophicus (strain ATCC 29096 / DSM 1053 / JCM 10044 / NBRC 100330 / Delta H) (Methanobacterium thermoautotrophicum).